A 390-amino-acid chain; its full sequence is Phosphoprotein (390 aa).

Thr-10 and Thr-16 each carry phosphothreonine. The span at 54–65 (QKNIQHPTASHQ) shows a compositional bias: polar residues. Disordered stretches follow at residues 54–98 (QKNI…EPLF) and 144–183 (RTST…KERS). Ser-69 is modified (phosphoserine). Residues Thr-91, Thr-150, and Thr-164 each carry the phosphothreonine modification. Ser-187 carries the phosphoserine modification. Thr-249 is modified (phosphothreonine). Ser-256 carries the phosphoserine modification. Phosphothreonine occurs at positions 257 and 281. Phosphoserine is present on residues Ser-291 and Ser-293. Thr-297 carries the post-translational modification Phosphothreonine. 2 positions are modified to phosphoserine: Ser-300 and Ser-373. An interaction with the nucleoprotein region spans residues 342–390 (AGRKVMITKMITDCVANPQMKQAFEQRLAKASTEDALNDIKKDIIRSAI). The residue at position 374 (Thr-374) is a Phosphothreonine.

It belongs to the rubulavirus/avulavirus P protein family. In terms of assembly, homotetramer. Interacts (via multimerization domain) with polymerase L; this interaction forms the polymerase L-P complex. Interacts (via N-terminus) with N0 (via Ncore); this interaction allows P to chaperon N0 to avoid N polymerization before encapsidation. Interacts (via C-terminus) with N-RNA template; this interaction positions the polymerase on the template for both transcription and replication. Interacts with host RPS6KB1 kinase; this interaction may play a role in the viral replication and transcription.

Functionally, essential cofactor of the RNA polymerase L that plays a central role in the transcription and replication by forming the polymerase complex with RNA polymerase L and recruiting L to the genomic N-RNA template for RNA synthesis. Also plays a central role in the encapsidation of nascent RNA chains by forming the encapsidation complex with the nucleocapsid protein N (N-P complex). Acts as a chaperone for newly synthesized free N protein, so-called N0, allowing encapsidation of nascent RNA chains during replication. The nucleoprotein protein N prevents excessive phosphorylation of P, which leads to down-regulation of viral transcription/ replication. Participates, together with N, in the formation of viral factories (viroplasms), which are large inclusions in the host cytoplasm where replication takes place. This Homo sapiens (Human) protein is Phosphoprotein (P/V).